The primary structure comprises 706 residues: Glutamine-dependent NAD(+) synthetase (706 aa).

One can recognise a CN hydrolase domain in the interval 5–275 (VTVATCALNQ…VEVLTATLDL (271 aa)). E45 functions as the Proton acceptor; for glutaminase activity in the catalytic mechanism. Catalysis depends on K114, which acts as the For glutaminase activity. C175 serves as the catalytic Nucleophile; for glutaminase activity. A ligase region spans residues 325 to 706 (YHSPEEEISL…AAPQSLDGVD (382 aa)). ATP is bound at residue 355–362 (PLSGGVDS). S357 is an active-site residue.

In the C-terminal section; belongs to the NAD synthetase family. Homohexamer.

The enzyme catalyses deamido-NAD(+) + L-glutamine + ATP + H2O = L-glutamate + AMP + diphosphate + NAD(+) + H(+). It participates in cofactor biosynthesis; NAD(+) biosynthesis; NAD(+) from deamido-NAD(+) (L-Gln route): step 1/1. Its function is as follows. Catalyzes the final step of the nicotinamide adenine dinucleotide (NAD) de novo synthesis pathway, the ATP-dependent amidation of deamido-NAD using L-glutamine as a nitrogen source. In Macaca fascicularis (Crab-eating macaque), this protein is Glutamine-dependent NAD(+) synthetase (NADSYN1).